The following is a 65-amino-acid chain: MKIYQCAFCGADIPPGYGIMYVKSDGTVLRYCSRKCFVSATKYGRNPRKLAWVRKLQRKQKQSTS.

Zn(2+) contacts are provided by cysteine 6, cysteine 9, cysteine 32, and cysteine 36. The C4-type zinc finger occupies 6 to 36; it reads CAFCGADIPPGYGIMYVKSDGTVLRYCSRKC.

This sequence belongs to the eukaryotic ribosomal protein eL24 family. As to quaternary structure, part of the 50S ribosomal subunit. Forms a cluster with proteins L3 and L14. Zn(2+) serves as cofactor.

In terms of biological role, binds to the 23S rRNA. This is Large ribosomal subunit protein eL24 from Pyrobaculum arsenaticum (strain DSM 13514 / JCM 11321 / PZ6).